Consider the following 151-residue polypeptide: Deoxyuridine 5'-triphosphate nucleotidohydrolase (151 aa).

Residues 70–72, Asn-83, 87–89, and Met-97 contribute to the substrate site; these read RSG and LID.

It belongs to the dUTPase family. It depends on Mg(2+) as a cofactor.

It catalyses the reaction dUTP + H2O = dUMP + diphosphate + H(+). It participates in pyrimidine metabolism; dUMP biosynthesis; dUMP from dCTP (dUTP route): step 2/2. Functionally, this enzyme is involved in nucleotide metabolism: it produces dUMP, the immediate precursor of thymidine nucleotides and it decreases the intracellular concentration of dUTP so that uracil cannot be incorporated into DNA. This Actinobacillus pleuropneumoniae serotype 5b (strain L20) protein is Deoxyuridine 5'-triphosphate nucleotidohydrolase.